Reading from the N-terminus, the 99-residue chain is Putative regulatory protein Kole_1849 (99 aa).

The protein belongs to the RemA family.

The protein is Putative regulatory protein Kole_1849 of Kosmotoga olearia (strain ATCC BAA-1733 / DSM 21960 / TBF 19.5.1).